Reading from the N-terminus, the 820-residue chain is MGTNGTTCPGPMKATSNGVFQGENPLEHALPLLILQICIVLLLTRLLAFLLRPLRQPRVIAEIVGGILLGPSALGKSTKFINTVFPPKSLTVLDTLANLGLIFFLFLVGLELDPKSLKRTGKRALSIALAGITLPFVLGIGTSFALRSSIADGASKAPFLVFMGVALSITAFPVLARILAEIKLLTTDIGKIALSAAAVNDVAAWILLALAVALSGEGSSPLTSLWVFLSGCGFVLFCIFVVQPGIKLIAKRCPEGEPVNELYVCCTLGIVLAASFVTDFIGIHALFGAFVIGVIFPKEGNFANALVEKVEDLVSGLFLPLYFVSSGLKTNVATIQGAQSWGLLVLVIFNACFGKIIGTVLVSLYCKVPLDQSLALGFLMNTKGLVELIVLNIGKDRGVLNDQIFAIMVLMAIFTTFMTTPLVLAVYKPGKSLTKADYKNRTVEETNRSNKPLCLMFCFQSIMNIPTIVNLIEASRGINRKENLSVYAMHLMELSERSSAILMAHKVRRNGLPFWNKDKSENNSSSSDMVVVAFEAFRRLSRVSVRPMTAISPMATIHEDICQSAERKKTAMVILPFHKHVRLDRTWETTRNDYRWINKKVMEESPCSVAILVDRGLGGTTRVASSDFSLTITVLFFGGNDDREALAFAVRMAEHPGISLTVVRFIPSDEFKPENVRIEITEDQLCSGATRLIDIEAITELKAKIKEKESSRSNSDSESHIIYEEKIVKCYEEVIEVIKEYSKSNLFLVGKSPEGSVASGINVRSDTPELGPIGNLLTESESVSTVASVLVVQQYIASRPVGISKNVTTEESLVEDSESP.

Helical transmembrane passes span 30–50 (LPLLILQICIVLLLTRLLAFL), 58–75 (RVIAEIVGGILLGPSALG), 90–110 (LTVLDTLANLGLIFFLFLVGL), 124–144 (ALSIALAGITLPFVLGIGTSF), 159–179 (FLVFMGVALSITAFPVLARIL), 192–212 (IALSAAAVNDVAAWILLALAV), 222–242 (LTSLWVFLSGCGFVLFCIFVV), 276–296 (FVTDFIGIHALFGAFVIGVIF), 313–333 (LVSGLFLPLYFVSSGLKTNVA), 342–362 (GLLVLVIFNACFGKIIGTVLV), 374–394 (LALGFLMNTKGLVELIVLNIG), and 404–424 (IFAIMVLMAIFTTFMTTPLVL). 2 positions are modified to phosphoserine: S817 and S819.

It belongs to the monovalent cation:proton antiporter 2 (CPA2) transporter (TC 2.A.37) family. CHX (TC 2.A.37.4) subfamily. In terms of tissue distribution, predominantly expressed in epidermal and cortical cells of mature roots but also barely detected in leaves.

The protein resides in the membrane. In terms of biological role, operates as a K(+)/H(+) antiporter that controls K(+) acquisition and homeostasis. The protein is Cation/H(+) antiporter 17 (CHX17) of Arabidopsis thaliana (Mouse-ear cress).